The chain runs to 258 residues: Ribosomal RNA small subunit methyltransferase A (258 aa).

His13, Leu15, Gly41, Asp63, Asp87, and Asn106 together coordinate S-adenosyl-L-methionine.

The protein belongs to the class I-like SAM-binding methyltransferase superfamily. rRNA adenine N(6)-methyltransferase family. RsmA subfamily.

The protein localises to the cytoplasm. It carries out the reaction adenosine(1518)/adenosine(1519) in 16S rRNA + 4 S-adenosyl-L-methionine = N(6)-dimethyladenosine(1518)/N(6)-dimethyladenosine(1519) in 16S rRNA + 4 S-adenosyl-L-homocysteine + 4 H(+). Specifically dimethylates two adjacent adenosines (A1518 and A1519) in the loop of a conserved hairpin near the 3'-end of 16S rRNA in the 30S particle. May play a critical role in biogenesis of 30S subunits. This is Ribosomal RNA small subunit methyltransferase A from Cytophaga hutchinsonii (strain ATCC 33406 / DSM 1761 / CIP 103989 / NBRC 15051 / NCIMB 9469 / D465).